A 389-amino-acid chain; its full sequence is MTDLPLLDTDGDPASTRVVVAMSGGVDSSVVAGLYARAGYDVVGVTLQLYDHGEAAHRRGACCAGQDIYDASEVARTLGIPHYVLDYESRFKEEVIDRFAASYASGVTPIPCVDCNRTVKFRDLLATAEELGARYLATGHYVASRALPDGRRGLYRAAEEARDQSYFLYATTAAQLERLRFPLGEMRKADVRALAAEFGLPVADKPDSQDICFVPGGDYAQVVQRLRPEAAEPGDIVHLDGRVLGRHRGVMHYTIGQRKGLGIATPEPLYVIAIDAARQQVRVGPRAALSVSAITIDDVNWLGDIPFTDALARQADVYVKVRSTRPPVPAHLARATDGTPAVHLAVGEEGVAPGQACVLYDDAGAAARLLGGGTIMRAERVAKSVAEVA.

ATP is bound by residues alanine 21–serine 28 and leucine 47. Cysteine 115 (nucleophile) is an active-site residue. Cysteine 115 and cysteine 212 form a disulfide bridge. Residue glycine 139 participates in ATP binding. The interval arginine 162 to glutamine 164 is interaction with tRNA. Cysteine 212 functions as the Cysteine persulfide intermediate in the catalytic mechanism.

This sequence belongs to the MnmA/TRMU family.

It localises to the cytoplasm. It catalyses the reaction S-sulfanyl-L-cysteinyl-[protein] + uridine(34) in tRNA + AH2 + ATP = 2-thiouridine(34) in tRNA + L-cysteinyl-[protein] + A + AMP + diphosphate + H(+). Catalyzes the 2-thiolation of uridine at the wobble position (U34) of tRNA, leading to the formation of s(2)U34. The chain is tRNA-specific 2-thiouridylase MnmA from Xanthobacter autotrophicus (strain ATCC BAA-1158 / Py2).